An 88-amino-acid chain; its full sequence is Putative septation protein SpoVG (88 aa).

Belongs to the SpoVG family.

Its function is as follows. Could be involved in septation. This Desulforudis audaxviator (strain MP104C) protein is Putative septation protein SpoVG.